Here is an 871-residue protein sequence, read N- to C-terminus: Dual O-methyltransferase/FAD-dependent monooxygenase CTB3 (871 aa).

The O-methyltransferase stretch occupies residues 1–429 (MMQFQRDLEA…GLLTVRSAGQ (429 aa)). Position 279 (Asp279) interacts with S-adenosyl-L-methionine. Catalysis depends on His331, which acts as the Proton acceptor. Residues 430–871 (TALSGTNTLT…NLVDCSEFVF (442 aa)) form an FAD-dependent monooxygenase region. Residues Glu485, Arg569, Asp793, and Ala806 each contribute to the FAD site.

This sequence in the C-terminal section; belongs to the paxM FAD-dependent monooxygenase family. The protein in the N-terminal section; belongs to the class I-like SAM-binding methyltransferase superfamily. Cation-independent O-methyltransferase family. COMT subfamily.

It catalyses the reaction nor-toralactone + S-adenosyl-L-methionine = toralactone + S-adenosyl-L-homocysteine + H(+). The enzyme catalyses toralactone + NADH + O2 + H(+) = 1-(3,4,5-trihydroxy-7-methoxynaphthalen-2-yl)propan-2-one + CO2 + NAD(+). It functions in the pathway mycotoxin biosynthesis. Functionally, dual O-methyltransferase/FAD-dependent monooxygenase; part of the gene cluster that mediates the biosynthesis of cercosporin, a light-activated, non-host-selective toxin. The perylenequinone chromophore of cercosporin absorbs light energy to attain an electronically-activated triplet state and produces active oxygen species such as the hydroxyl radical, superoxide, hydrogen peroxide or singlet oxygen upon reaction with oxygen molecules. These reactive oxygen species cause damage to various cellular components including lipids, proteins and nucleic acids. The first step of cercosporin biosynthesis is performed by the polyketide synthase CTB1 which catalyzes the formation of nor-toralactone. The starter unit acyltransferase (SAT) domain of CTB1 initiates polyketide extension by the selective utilization of acetyl-CoA, which is elongated to the heptaketide in the beta-ketoacyl synthase (KS) domain by successive condensations with six malonyl units introduced by the malonyl acyltransferase (MAT) domain. The product template (PT) domain catalyzes C4-C9 and C2-C11 aldol cyclizations and dehydrations to a trihydroxynaphthalene, which is thought to be delivered to the thioesterase (TE) domain for product release. The bifunctional enzyme CTB3 then methylates nor-toralactone to toralactone before conducting an unusual oxidative aromatic ring opening. The O-methyltransferase CTB2 further methylates the nascent OH-6 of the CBT3 product, blocking further oxidation at this site before the reductase CTB6 reduces the 2-oxopropyl ketone at position C7, giving naphthalene. The FAD-dependent monooxygenase CTB5 in concert with the multicopper oxidase CTB12 are responsible for homodimerization of naphthalene with CTB7 installing the dioxepine moiety, finally producing cercosporin. The fasciclin domain-containing protein CTB11 might act with CTB5 and CTB12 whereas the roles of CTB9 and CTB10 have still to be elucidated. This is Dual O-methyltransferase/FAD-dependent monooxygenase CTB3 from Cercospora beticola (Sugarbeet leaf spot fungus).